Reading from the N-terminus, the 144-residue chain is MNFKYIIAVSFFIASAYARSEEKDVQSLSQRDVLEEESLREIRGIGGVLLSAGKAALKGLAKVLAEKYANGKRTAEDHEVMKRLEAVMRDLDSLDHPEEASERETRGFNQEEIANLFTKKEKRILGPVLGLVGNALGGLIKKIG.

A signal peptide spans M1–A18. Positions R19–R43 are excised as a propeptide. An Asparagine amide modification is found at N70. Residues T74 to R123 constitute a propeptide that is removed on maturation. An Isoleucine amide modification is found at I143.

It belongs to the bombinin family. Expressed by the skin glands.

It localises to the secreted. Its function is as follows. Maximin-4 shows antibacterial activity against both Gram-positive and Gram-negative bacteria. It also shows antimicrobial activity against the fungus C.albicans, but not against A.flavus nor P.uticale. It has little hemolytic activity. It does not possess a significant cytotoxicity against tumor cell lines. It does not possess a significant anti-HIV activity. Functionally, maximin-H3 shows antibacterial activity against both Gram-positive and Gram-negative bacteria. It also shows antimicrobial activity against the fungus C.albicans. Shows strong hemolytic activity. This chain is Maximins 4/H3 type 1, found in Bombina maxima (Giant fire-bellied toad).